The following is a 197-amino-acid chain: Stanniocalcin-2 (197 aa).

The tract at residues 1–20 is disordered; that stretch reads TDAXNPPEGPQDRGSQQKGR.

Belongs to the stanniocalcin family. As to quaternary structure, homodimer; disulfide-linked.

Its subcellular location is the secreted. Functionally, has an anti-hypocalcemic action on calcium and phosphate homeostasis. The polypeptide is Stanniocalcin-2 (STC2) (Cavia porcellus (Guinea pig)).